Here is a 593-residue protein sequence, read N- to C-terminus: AT-rich interactive domain-containing protein 3A (593 aa).

The disordered stretch occupies residues 14-222 (QQRARQELEA…PQLQPPDHGD (209 aa)). The segment covering 41-53 (AAPDEDREPESAR) has biased composition (basic and acidic residues). Low complexity predominate over residues 54–87 (MQRAQMAALAAMRAAAAGLGHPASPGGSEDGPPG). Residues Ser-77, Ser-81, and Ser-88 each carry the phosphoserine modification. Thr-98 carries the phosphothreonine modification. Ser-101 and Ser-119 each carry phosphoserine. Positions 104 to 127 (RGREGPGEEHFEDMASDEDMKPKW) are enriched in basic and acidic residues. The acidic stretch occupies residues 119–156 (SDEDMKPKWEEEEMEEDLGEDEEEEEEDYEDEEEEEDE). Residues 128–158 (EEEEMEEDLGEDEEEEEEDYEDEEEEEDEEG) are compositionally biased toward acidic residues. Residues 238–330 (DPKRKEFLDD…YLYPYECEKR (93 aa)) form the ARID domain. Phosphoserine occurs at positions 353 and 362. Glycyl lysine isopeptide (Lys-Gly) (interchain with G-Cter in SUMO2) cross-links involve residues Lys-398, Lys-399, Lys-452, and Lys-462. In terms of domain architecture, REKLES spans 444–541 (AALEQLREKL…GVLFAQPPAP (98 aa)). The interval 445–488 (ALEQLREKLESAEPPEKKMALVADEQQRLMQRALQQNFLAMAAQ) is important for nuclear localization. A homodimerization region spans residues 490-513 (PMSIRINSQASESRQDSAVNLTGT). Disordered stretches follow at residues 497-516 (SQASESRQDSAVNLTGTNGS) and 539-593 (PAPT…NSLP). Positions 537 to 557 (QPPAPTPTSAPNKGGGGGGGS) are important for cytoplasmic localization. A compositionally biased stretch (gly residues) spans 549–576 (KGGGGGGGSSSNAGGRGGNTGTSGGQAG). A compositionally biased stretch (low complexity) spans 580–593 (LSTPSTSTSNNSLP).

Homodimer. Heterodimer with ARID3B. Interacts with E2F1. Interacts with GTF2I and BTK. In terms of tissue distribution, widely expressed, with highest expression in skeletal muscle, thalamus, and colon.

It is found in the nucleus. The protein resides in the cytoplasm. In terms of biological role, transcription factor which may be involved in the control of cell cycle progression by the RB1/E2F1 pathway and in B-cell differentiation. This chain is AT-rich interactive domain-containing protein 3A (ARID3A), found in Homo sapiens (Human).